We begin with the raw amino-acid sequence, 48 residues long: MPQLVPFYFLNQLVYGFALVTILLVLFAQYFLPQILRLYVSRLFISKL.

Residues 13–32 (LVYGFALVTILLVLFAQYFL) traverse the membrane as a helical segment.

It belongs to the ATPase protein 8 family. F-type ATPases have 2 components, CF(1) - the catalytic core - and CF(0) - the membrane proton channel.

It localises to the mitochondrion membrane. In terms of biological role, mitochondrial membrane ATP synthase (F(1)F(0) ATP synthase or Complex V) produces ATP from ADP in the presence of a proton gradient across the membrane which is generated by electron transport complexes of the respiratory chain. F-type ATPases consist of two structural domains, F(1) - containing the extramembraneous catalytic core and F(0) - containing the membrane proton channel, linked together by a central stalk and a peripheral stalk. During catalysis, ATP synthesis in the catalytic domain of F(1) is coupled via a rotary mechanism of the central stalk subunits to proton translocation. Part of the complex F(0) domain. Minor subunit located with subunit a in the membrane. This chain is ATP synthase protein 8 (ATP8), found in Kluyveromyces lactis (strain ATCC 8585 / CBS 2359 / DSM 70799 / NBRC 1267 / NRRL Y-1140 / WM37) (Yeast).